Consider the following 388-residue polypeptide: Succinate--CoA ligase [ADP-forming] subunit beta (388 aa).

In terms of domain architecture, ATP-grasp spans 9-236; it reads KKLFAEHGVP…VAAVDPLEQK (228 aa). ATP is bound by residues Lys45, 52-54, Glu91, Ser94, and Glu99; that span reads GRG. Mg(2+) is bound by residues Asn191 and Asp205. Substrate-binding positions include Asn256 and 318 to 320; that span reads GIT.

It belongs to the succinate/malate CoA ligase beta subunit family. As to quaternary structure, heterotetramer of two alpha and two beta subunits. Requires Mg(2+) as cofactor.

It carries out the reaction succinate + ATP + CoA = succinyl-CoA + ADP + phosphate. The catalysed reaction is GTP + succinate + CoA = succinyl-CoA + GDP + phosphate. It functions in the pathway carbohydrate metabolism; tricarboxylic acid cycle; succinate from succinyl-CoA (ligase route): step 1/1. Succinyl-CoA synthetase functions in the citric acid cycle (TCA), coupling the hydrolysis of succinyl-CoA to the synthesis of either ATP or GTP and thus represents the only step of substrate-level phosphorylation in the TCA. The beta subunit provides nucleotide specificity of the enzyme and binds the substrate succinate, while the binding sites for coenzyme A and phosphate are found in the alpha subunit. This chain is Succinate--CoA ligase [ADP-forming] subunit beta, found in Frankia casuarinae (strain DSM 45818 / CECT 9043 / HFP020203 / CcI3).